The primary structure comprises 666 residues: DNA mismatch repair protein MutL (666 aa).

The protein belongs to the DNA mismatch repair MutL/HexB family.

Its function is as follows. This protein is involved in the repair of mismatches in DNA. It is required for dam-dependent methyl-directed DNA mismatch repair. May act as a 'molecular matchmaker', a protein that promotes the formation of a stable complex between two or more DNA-binding proteins in an ATP-dependent manner without itself being part of a final effector complex. In Clostridium botulinum (strain Kyoto / Type A2), this protein is DNA mismatch repair protein MutL.